The following is a 545-amino-acid chain: O-phosphoserine--tRNA(Cys) ligase (545 aa).

Substrate is bound by residues 189-191 (HMT), 234-236 (SAS), 276-277 (YY), and asparagine 328.

Belongs to the class-II aminoacyl-tRNA synthetase family. O-phosphoseryl-tRNA(Cys) synthetase subfamily. In terms of assembly, homotetramer. Interacts with SepCysS.

It catalyses the reaction tRNA(Cys) + O-phospho-L-serine + ATP = O-phospho-L-seryl-tRNA(Cys) + AMP + diphosphate. Catalyzes the attachment of O-phosphoserine (Sep) to tRNA(Cys). This chain is O-phosphoserine--tRNA(Cys) ligase, found in Methanothrix thermoacetophila (strain DSM 6194 / JCM 14653 / NBRC 101360 / PT) (Methanosaeta thermophila).